We begin with the raw amino-acid sequence, 298 residues long: ATP synthase gamma chain (298 aa).

Belongs to the ATPase gamma chain family. F-type ATPases have 2 components, CF(1) - the catalytic core - and CF(0) - the membrane proton channel. CF(1) has five subunits: alpha(3), beta(3), gamma(1), delta(1), epsilon(1). CF(0) has three main subunits: a, b and c.

The protein localises to the cell inner membrane. In terms of biological role, produces ATP from ADP in the presence of a proton gradient across the membrane. The gamma chain is believed to be important in regulating ATPase activity and the flow of protons through the CF(0) complex. This is ATP synthase gamma chain from Bacteroides thetaiotaomicron (strain ATCC 29148 / DSM 2079 / JCM 5827 / CCUG 10774 / NCTC 10582 / VPI-5482 / E50).